The chain runs to 606 residues: DNA mismatch repair protein MutL (606 aa).

The segment at 377 to 401 (HRPLFAPQPAPQPDREPPLPDSGSR) is disordered.

The protein belongs to the DNA mismatch repair MutL/HexB family.

Its function is as follows. This protein is involved in the repair of mismatches in DNA. It is required for dam-dependent methyl-directed DNA mismatch repair. May act as a 'molecular matchmaker', a protein that promotes the formation of a stable complex between two or more DNA-binding proteins in an ATP-dependent manner without itself being part of a final effector complex. The protein is DNA mismatch repair protein MutL of Geobacter sulfurreducens (strain ATCC 51573 / DSM 12127 / PCA).